The sequence spans 272 residues: Putative phosphoenolpyruvate synthase regulatory protein (272 aa).

152–159 (GVSRCGKT) is an ADP binding site.

This sequence belongs to the pyruvate, phosphate/water dikinase regulatory protein family. PSRP subfamily.

The enzyme catalyses [pyruvate, water dikinase] + ADP = [pyruvate, water dikinase]-phosphate + AMP + H(+). It carries out the reaction [pyruvate, water dikinase]-phosphate + phosphate + H(+) = [pyruvate, water dikinase] + diphosphate. Its function is as follows. Bifunctional serine/threonine kinase and phosphorylase involved in the regulation of the phosphoenolpyruvate synthase (PEPS) by catalyzing its phosphorylation/dephosphorylation. In Pseudomonas fluorescens (strain SBW25), this protein is Putative phosphoenolpyruvate synthase regulatory protein.